A 669-amino-acid chain; its full sequence is Armadillo repeat-containing protein gudu (669 aa).

Polar residues predominate over residues 1-10 (MIGTSSGTSH). The tract at residues 1–53 (MIGTSSGTSHNRSRKKKEQCGSCPNRFSKDKRQVAAEDSDTTEVESSTDEEER) is disordered. Residues 37–51 (EDSDTTEVESSTDEE) are compositionally biased toward acidic residues. 10 ARM repeats span residues 100–139 (QINQ…DITL), 141–180 (IDIR…NVCK), 240–279 (KHNM…KCSS), 281–320 (PKFQ…KCAF), 322–365 (GTTR…MCAV), 367–406 (DANV…ECVR), 408–447 (QSNR…ECAE), 492–531 (DSAE…TIAQ), 574–613 (GNNT…KLSM), and 615–654 (PQNC…NIRE).

Highly expressed in testis.

Its function is as follows. Important for spermatogenesis where it may have a role in sperm individualization. This Drosophila melanogaster (Fruit fly) protein is Armadillo repeat-containing protein gudu.